The primary structure comprises 144 residues: Probable copper-binding protein PcoE (144 aa).

The first 20 residues, 1–20 (MKKILVSFVAIMAVASSAMA), serve as a signal peptide directing secretion. Residues 86–144 (MHKKMMKSKPAASNETAKSFSEMNEHEKSAVVHEKANNGQSSVIHQQQAEKHRSQITQN) form a disordered region. Residues 96-107 (AASNETAKSFSE) show a composition bias toward polar residues. The segment covering 108–121 (MNEHEKSAVVHEKA) has biased composition (basic and acidic residues). Positions 122-132 (NNGQSSVIHQQ) are enriched in polar residues.

To S.typhimurium SilE.

It localises to the periplasm. Required for the copper-inducible expression of copper resistance. Activated by the two-component regulatory system CusS/CusR. The polypeptide is Probable copper-binding protein PcoE (pcoE) (Escherichia coli).